The following is a 264-amino-acid chain: Phosphonoacetaldehyde hydrolase (264 aa).

The active-site Nucleophile is D9. 2 residues coordinate Mg(2+): D9 and A11. The active-site Schiff-base intermediate with substrate is K50. D183 is a binding site for Mg(2+).

The protein belongs to the HAD-like hydrolase superfamily. PhnX family. In terms of assembly, homodimer. Mg(2+) serves as cofactor.

It catalyses the reaction phosphonoacetaldehyde + H2O = acetaldehyde + phosphate + H(+). In terms of biological role, involved in phosphonate degradation. The sequence is that of Phosphonoacetaldehyde hydrolase from Bacillus anthracis.